Consider the following 205-residue polypeptide: Holliday junction branch migration complex subunit RuvA (205 aa).

Residues Met-1–Lys-62 form a domain I region. The tract at residues Thr-63–Leu-141 is domain II. Positions Phe-142–Lys-152 are flexible linker. Residues Gly-153 to Arg-205 are domain III.

It belongs to the RuvA family. In terms of assembly, homotetramer. Forms an RuvA(8)-RuvB(12)-Holliday junction (HJ) complex. HJ DNA is sandwiched between 2 RuvA tetramers; dsDNA enters through RuvA and exits via RuvB. An RuvB hexamer assembles on each DNA strand where it exits the tetramer. Each RuvB hexamer is contacted by two RuvA subunits (via domain III) on 2 adjacent RuvB subunits; this complex drives branch migration. In the full resolvosome a probable DNA-RuvA(4)-RuvB(12)-RuvC(2) complex forms which resolves the HJ.

The protein localises to the cytoplasm. Its function is as follows. The RuvA-RuvB-RuvC complex processes Holliday junction (HJ) DNA during genetic recombination and DNA repair, while the RuvA-RuvB complex plays an important role in the rescue of blocked DNA replication forks via replication fork reversal (RFR). RuvA specifically binds to HJ cruciform DNA, conferring on it an open structure. The RuvB hexamer acts as an ATP-dependent pump, pulling dsDNA into and through the RuvAB complex. HJ branch migration allows RuvC to scan DNA until it finds its consensus sequence, where it cleaves and resolves the cruciform DNA. This is Holliday junction branch migration complex subunit RuvA from Bacillus cereus (strain AH187).